The primary structure comprises 826 residues: Leucine--tRNA ligase (826 aa).

Positions proline 41–histidine 51 match the 'HIGH' region motif. A 'KMSKS' region motif is present at residues lysine 586–serine 590. Lysine 589 contacts ATP.

Belongs to the class-I aminoacyl-tRNA synthetase family.

It is found in the cytoplasm. It carries out the reaction tRNA(Leu) + L-leucine + ATP = L-leucyl-tRNA(Leu) + AMP + diphosphate. This Natranaerobius thermophilus (strain ATCC BAA-1301 / DSM 18059 / JW/NM-WN-LF) protein is Leucine--tRNA ligase.